Consider the following 785-residue polypeptide: Leucyl aminopeptidase (785 aa).

Substrate-binding positions include Glu106 and 238–242; that span reads GAMEN. His273 contributes to the Zn(2+) binding site. The active-site Proton acceptor is Glu274. Residues His277 and Glu296 each contribute to the Zn(2+) site.

Belongs to the peptidase M1 family. Co-immunoprecipitates with the 60 kDa chaperonin. Zn(2+) serves as cofactor. Post-translationally, can be phosphorylated by cell extracts.

It is found in the cytoplasm. It carries out the reaction Release of an N-terminal amino acid, Xaa-|-Yaa-, in which Xaa is preferably Leu, but may be other amino acids including Pro although not Arg or Lys, and Yaa may be Pro. Amino acid amides and methyl esters are also readily hydrolyzed, but rates on arylamides are exceedingly low.. In terms of biological role, preferentially acts as a leucyl-aminopeptidase, although it also has activity against other substrates. This Saccharolobus solfataricus (strain ATCC 35092 / DSM 1617 / JCM 11322 / P2) (Sulfolobus solfataricus) protein is Leucyl aminopeptidase (ape2).